We begin with the raw amino-acid sequence, 725 residues long: NAD(+) hydrolase SARM1 (725 aa).

The transit peptide at 1-27 directs the protein to the mitochondrion; that stretch reads MVLTILFSAYKLCRFFAMSSPRPGAER. The stretch at 60–100 is one ARM 1 repeat; it reads EVQGALERALPELQQALSALKQAGGGRAVGAGLAEVFQLVE. Residues Trp103, Arg110, 149–158, and 191–194 contribute to the NAD(+) site; these read EQILVAENRR and HMFK. 7 ARM repeats span residues 114 to 153, 155 to 194, 197 to 236, 238 to 281, 282 to 315, 316 to 355, and 360 to 403; these read QGLCDAIRLEGGLDLLLRLLQAPELETRVQAARLLEQILV, ENRRDRVARIGLGVILNLAKEREPVELARSVAGILEHMFK, EETCQRLVAAGGLDAVLYWCRRTDPALLRHCALALANCAM, GGQA…LATN, KEVEREVERSGTLALVEPLVASLDPGRFARCLVD, ASDTSQGRGPDDLQRLVPLLDSSRMEAQCIGAFYLCAEAV, and KNRN…EEVP. SAM domains follow at residues 413-477 and 483-549; these read WKEA…LKTF and CDRS…MLHS. Ser549 and Ser559 each carry phosphoserine. In terms of domain architecture, TIR spans 561–704; it reads DVPDVFISYR…KIIRFLQGRS (144 aa). NAD(+)-binding positions include 570 to 571 and Glu600; that span reads RR. Residue Glu643 is part of the active site. A disordered region spans residues 705-725; the sequence is SRDSSAGSDTSLEGAAPMGPT.

This sequence belongs to the SARM1 family. In terms of assembly, homooctamer; forms an octameric ring via SAM domains. Interacts with TICAM1/TRIF and thereby interferes with TICAM1/TRIF function. Interacts with MAPK10/JNK3 and SDC2 (via cytoplasmic domain). Phosphorylation at Ser-549 by JNK kinases (MAPK8, MAPK9 and /or MAPK10) enhance the NAD(+) hydrolase (NADase) activity. Phosphorylation at Ser-549 and subsequent activation takes place in response to oxidative stress conditions and inhibits mitochondrial respiration. As to expression, highest expression seen in the spleen and the brain, followed by lung, kidney, liver and other tissues.

Its subcellular location is the cytoplasm. It is found in the cell projection. The protein resides in the axon. It localises to the dendrite. The protein localises to the synapse. Its subcellular location is the mitochondrion. The enzyme catalyses NAD(+) + H2O = ADP-D-ribose + nicotinamide + H(+). The catalysed reaction is NAD(+) = cyclic ADP-beta-D-ribose + nicotinamide + H(+). It catalyses the reaction NADP(+) + H2O = ADP-D-ribose 2'-phosphate + nicotinamide + H(+). Its activity is regulated as follows. Autoinhibited: in the inactive state, the enzymatic TIR domain is held apart by the autoinhibiting ARM repeats. NAD(+)-binding to ARM repeats maintains an inactive state by promoting interaction between ARM repeats and the TIR domain, thereby facilitating inhibition of the enzymatic TIR domain. Following activation, possibly by nicotinamide mononucleotide (NMN), auto-inhibitory interactions are released, allowing self-association of the TIR domains and subsequent activation of the NAD(+) hydrolase (NADase) activity. Self-association of TIR domains is facilitated by the octamer of SAM domains. Its function is as follows. NAD(+) hydrolase, which plays a key role in axonal degeneration following injury by regulating NAD(+) metabolism. Acts as a negative regulator of MYD88- and TRIF-dependent toll-like receptor signaling pathway by promoting Wallerian degeneration, an injury-induced form of programmed subcellular death which involves degeneration of an axon distal to the injury site. Wallerian degeneration is triggered by NAD(+) depletion: in response to injury, SARM1 is activated and catalyzes cleavage of NAD(+) into ADP-D-ribose (ADPR), cyclic ADPR (cADPR) and nicotinamide; NAD(+) cleavage promoting cytoskeletal degradation and axon destruction. Also able to hydrolyze NADP(+), but not other NAD(+)-related molecules. Can activate neuronal cell death in response to stress. Regulates dendritic arborization through the MAPK4-JNK pathway. Involved in innate immune response: inhibits both TICAM1/TRIF- and MYD88-dependent activation of JUN/AP-1, TRIF-dependent activation of NF-kappa-B and IRF3, and the phosphorylation of MAPK14/p38. The sequence is that of NAD(+) hydrolase SARM1 from Sus scrofa (Pig).